The sequence spans 117 residues: Large ribosomal subunit protein uL22 (117 aa).

It belongs to the universal ribosomal protein uL22 family. In terms of assembly, part of the 50S ribosomal subunit.

Functionally, this protein binds specifically to 23S rRNA; its binding is stimulated by other ribosomal proteins, e.g. L4, L17, and L20. It is important during the early stages of 50S assembly. It makes multiple contacts with different domains of the 23S rRNA in the assembled 50S subunit and ribosome. In terms of biological role, the globular domain of the protein is located near the polypeptide exit tunnel on the outside of the subunit, while an extended beta-hairpin is found that lines the wall of the exit tunnel in the center of the 70S ribosome. This Synechococcus elongatus (strain ATCC 33912 / PCC 7942 / FACHB-805) (Anacystis nidulans R2) protein is Large ribosomal subunit protein uL22.